Reading from the N-terminus, the 208-residue chain is Large ribosomal subunit protein uL3 (208 aa).

Position 149 is an N5-methylglutamine (Gln-149).

Belongs to the universal ribosomal protein uL3 family. Part of the 50S ribosomal subunit. Forms a cluster with proteins L14 and L19. Methylated by PrmB.

Functionally, one of the primary rRNA binding proteins, it binds directly near the 3'-end of the 23S rRNA, where it nucleates assembly of the 50S subunit. This Actinobacillus pleuropneumoniae serotype 5b (strain L20) protein is Large ribosomal subunit protein uL3.